A 429-amino-acid chain; its full sequence is Probable M18 family aminopeptidase 2 (429 aa).

The Zn(2+) site is built by His-82, His-156, and His-401.

It belongs to the peptidase M18 family. It depends on Zn(2+) as a cofactor.

In Pseudomonas entomophila (strain L48), this protein is Probable M18 family aminopeptidase 2.